The sequence spans 267 residues: Integral membrane protein 2C (267 aa).

A Phosphothreonine modification is found at T37. The helical; Signal-anchor for type II membrane protein transmembrane segment at V55–A75 threads the bilayer. Residues F136–L230 enclose the BRICHOS domain. Cysteines 163 and 222 form a disulfide. Residue N169 is glycosylated (N-linked (GlcNAc...) asparagine).

Belongs to the ITM2 family. In terms of assembly, interacts with BACE1. Interacts with APP. Interacts with STMN2. Post-translationally, type I membrane-bound, as well as soluble, furin has a pre-eminent role in ITM2C proteolytic processing. PCSK7 and PCSK5 may also be involved although to a lesser extent. The soluble form of PCSK7 is incapable of processing ITM2C. Fails to undergo shedding by ADAM10 and intramembrane cleavage by SPPL2B. As to expression, high levels in the brain, specifically in the cerebral cortex, medulla, amygdala, hippocampus, thalamus, caudate nucleus, cerebellum, olfactory lobe and spinal cord. Very low levels in other organs.

It localises to the lysosome membrane. It is found in the cell membrane. Negative regulator of amyloid-beta peptide production. May inhibit the processing of APP by blocking its access to alpha- and beta-secretase. Binding to the beta-secretase-cleaved APP C-terminal fragment is negligible, suggesting that ITM2C is a poor gamma-secretase cleavage inhibitor. May play a role in TNF-induced cell death and neuronal differentiation. The sequence is that of Integral membrane protein 2C (ITM2C) from Homo sapiens (Human).